Here is a 317-residue protein sequence, read N- to C-terminus: MTVIDDRDMMGAESSELSEAGARDYFELLKPRVMSLVVFTAFAGLVLAPGEINPILGLIAILCIAVGAGASGALNMWYDADIDAVMTRTAKRPIPSGRIAPREALAFGLTLSAFSVVILGLAVNWFSAGLLAFTIFFYAVVYTMWLKRSTPQNIVIGGAAGAFPPMLGWACVTGGVSLDSVILFLIIFLWTPAHFWALALFKMRDYGAVGIPMMPNVAGERSTKNQMIVYAVLTAAAAVAPFFTGLASAGYGIFAAVLSAIFVYCSFDVRRMPEGDEKMLPAKKMFAYSVLYLFAIFSGLLADHFAPALKAVISGVL.

7 helical membrane passes run 33–53 (VMSL…GEIN), 54–74 (PILG…SGAL), 117–137 (VILG…TIFF), 154–174 (IVIG…CVTG), 181–201 (VILF…LALF), 242–262 (FFTG…SAIF), and 285–305 (MFAY…ADHF).

It belongs to the UbiA prenyltransferase family. Protoheme IX farnesyltransferase subfamily.

Its subcellular location is the cell inner membrane. The catalysed reaction is heme b + (2E,6E)-farnesyl diphosphate + H2O = Fe(II)-heme o + diphosphate. Its pathway is porphyrin-containing compound metabolism; heme O biosynthesis; heme O from protoheme: step 1/1. Functionally, converts heme B (protoheme IX) to heme O by substitution of the vinyl group on carbon 2 of heme B porphyrin ring with a hydroxyethyl farnesyl side group. This Agrobacterium fabrum (strain C58 / ATCC 33970) (Agrobacterium tumefaciens (strain C58)) protein is Protoheme IX farnesyltransferase.